A 1041-amino-acid polypeptide reads, in one-letter code: Collagen alpha-2(I) chain (1041 aa).

The interval 1 to 1041 is disordered; the sequence is SGGFDFSFLP…FGYEGDFYRA (1041 aa). Pro10, Pro13, Pro39, and Pro45 each carry 4-hydroxyproline. Composition is skewed to low complexity over residues 25-45 and 55-76; these read LGPGPMGLMGPRGPPGASGAP and EPGEPGQTGPAGARGPAGPPGK. Positions 77-91 are enriched in basic and acidic residues; sequence AGEDGHPGKPGRPGE. Lys113 is subject to 5-hydroxylysine; alternate. O-linked (Gal...) hydroxylysine; alternate glycosylation occurs at Lys113. Composition is skewed to low complexity over residues 174–189 and 235–256; these read SVGPVGPAGPIGSAGP and PGANGLTGAKGAAGLPGVAGAP. Over residues 290 to 299 the composition is skewed to gly residues; it reads GESGGKGEPG. Residues 300-310 show a composition bias toward low complexity; it reads SAGPQGPPGSS. Over residues 332 to 341 the composition is skewed to gly residues; the sequence is GLRGGPGSRG. Low complexity predominate over residues 354–370; the sequence is PAGARGASGPAGVRGPS. Pro376 and Pro379 each carry 4-hydroxyproline. Low complexity predominate over residues 405 to 424; it reads LPGIDGRPGPIGPAGARGEA. A compositionally biased stretch (gly residues) spans 466-475; it reads GVQGGKGEQG. Low complexity-rich tracts occupy residues 522–539 and 551–561; these read SGESGAVGPSGAIGSRGP and EPGVVGAPGTA. Gly residues predominate over residues 562 to 571; the sequence is GPAGSGGLPG. Low complexity-rich tracts occupy residues 594-638 and 645-665; these read VGTT…PRGS and VGPAGPNGFAGPAGAAGQPGA. A compositionally biased stretch (basic and acidic residues) spans 666–675; it reads KGERGTKGPK. Residues 683 to 693 show a composition bias toward low complexity; it reads PTGPVGSAGPA. Residues 703–712 show a composition bias toward gly residues; it reads GSRGDGGPPG. Low complexity predominate over residues 714 to 723; the sequence is TGFPGAAGRT. Residues 754–768 show a composition bias toward gly residues; the sequence is GPVGRGETGAGGPPG. Low complexity-rich tracts occupy residues 769–803 and 811–821; these read FTGEKGPSGEPGTAGPPGTAGPQGLLGAPGILGLP and LPGVAGAVGEP. The span at 822 to 840 shows a compositional bias: gly residues; the sequence is GPLGIGPPGARGPSGGVPG. Composition is skewed to low complexity over residues 874-887 and 903-918; these read YAGNPGPVGAAGAP and EPGPVGSAGPVGALGP. Residues 928–939 are compositionally biased toward basic and acidic residues; sequence RGDKGEAGDKGP. The span at 1013–1023 shows a compositional bias: pro residues; that stretch reads PAGPPGPPGPP.

This sequence belongs to the fibrillar collagen family. In terms of assembly, trimers of one alpha 2(I) and two alpha 1(I) chains. Interacts (via C-terminus) with TMEM131 (via PapD-L domain); the interaction is direct and is involved in assembly and TRAPPIII ER-to-Golgi transport complex-dependent secretion of collagen. In terms of processing, prolines at the third position of the tripeptide repeating unit (G-X-Y) are hydroxylated in some or all of the chains. Expressed in bones.

Its subcellular location is the secreted. The protein resides in the extracellular space. It localises to the extracellular matrix. Functionally, type I collagen is a member of group I collagen (fibrillar forming collagen). This chain is Collagen alpha-2(I) chain, found in Paramylodon harlani (Harlan's ground sloth).